The chain runs to 219 residues: Protein Cmaq_0360 (219 aa).

One can recognise an AMMECR1 domain in the interval 8 to 204 (EQGKFLVRLA…EKGPRGDVYE (197 aa)).

The protein is Protein Cmaq_0360 of Caldivirga maquilingensis (strain ATCC 700844 / DSM 13496 / JCM 10307 / IC-167).